We begin with the raw amino-acid sequence, 903 residues long: Probable leucine--tRNA ligase, mitochondrial (903 aa).

Lysine 68 is subject to N6-acetyllysine. Residues tyrosine 92–valine 102 carry the 'HIGH' region motif. The residue at position 236 (lysine 236) is an N6-acetyllysine. The 'KMSKS' region motif lies at lysine 639–serine 643. Lysine 642 contacts ATP. Serine 711 bears the Phosphoserine mark.

It belongs to the class-I aminoacyl-tRNA synthetase family.

It is found in the mitochondrion matrix. It carries out the reaction tRNA(Leu) + L-leucine + ATP = L-leucyl-tRNA(Leu) + AMP + diphosphate. This Pongo abelii (Sumatran orangutan) protein is Probable leucine--tRNA ligase, mitochondrial (LARS2).